Consider the following 430-residue polypeptide: Glutamate-1-semialdehyde 2,1-aminomutase (430 aa).

K265 carries the post-translational modification N6-(pyridoxal phosphate)lysine.

The protein belongs to the class-III pyridoxal-phosphate-dependent aminotransferase family. HemL subfamily. In terms of assembly, homodimer. Pyridoxal 5'-phosphate is required as a cofactor.

It localises to the cytoplasm. It carries out the reaction (S)-4-amino-5-oxopentanoate = 5-aminolevulinate. The protein operates within porphyrin-containing compound metabolism; protoporphyrin-IX biosynthesis; 5-aminolevulinate from L-glutamyl-tRNA(Glu): step 2/2. The polypeptide is Glutamate-1-semialdehyde 2,1-aminomutase (Shewanella baltica (strain OS155 / ATCC BAA-1091)).